The chain runs to 357 residues: DNA replication and repair protein RecF (357 aa).

30-37 contacts ATP; sequence GANGSGKT.

The protein belongs to the RecF family.

Its subcellular location is the cytoplasm. Functionally, the RecF protein is involved in DNA metabolism; it is required for DNA replication and normal SOS inducibility. RecF binds preferentially to single-stranded, linear DNA. It also seems to bind ATP. The chain is DNA replication and repair protein RecF from Cronobacter sakazakii (strain ATCC BAA-894) (Enterobacter sakazakii).